The sequence spans 210 residues: Natriuretic peptide BM026 (210 aa).

Residues 1–26 (MVGPSRLAGGGLLLLLLALLPVALDG) form the signal peptide. The natriuretic peptide domain 1 stretch occupies residues 83 to 99 (CFGHKIDRISHSSGMGC). An intrachain disulfide couples Cys-83 to Cys-99. A compositionally biased stretch (basic and acidic residues) spans 122–134 (ESKKSRAARDRMV). The disordered stretch occupies residues 122–210 (ESKKSRAARD…QFNSKSSQVA (89 aa)). Over residues 140-150 (AGGGGGGGGGD) the composition is skewed to gly residues. Residues 156–176 (ELAKKDQHNNCFGRRIDRISH) are compositionally biased toward basic and acidic residues. Residues 166-182 (CFGRRIDRISHSTDLGC) are natriuretic peptide domain 2. An intrachain disulfide couples Cys-166 to Cys-182. Residues 201-210 (QFNSKSSQVA) are compositionally biased toward polar residues.

Belongs to the natriuretic peptide family. Expressed by the venom gland.

The protein resides in the secreted. Natriuretic peptide that dose-dependently induces the rapid relaxation of rat aortic strips phenylephrine-precontracted. Acts by stimulating cGMP production in a dose-dependent manner (by probably activating NPR1 and/or NPR2). May also show potent hypotensive effects. In Bungarus multicinctus (Many-banded krait), this protein is Natriuretic peptide BM026.